Here is a 221-residue protein sequence, read N- to C-terminus: Probable GTP-binding protein EngB (221 aa).

Residues 23 to 211 form the EngB-type G domain; the sequence is PLREVAFAGR…DNLIIKWLFE (189 aa). The Mg(2+) site is built by S38 and T60.

It belongs to the TRAFAC class TrmE-Era-EngA-EngB-Septin-like GTPase superfamily. EngB GTPase family. Mg(2+) serves as cofactor.

Functionally, necessary for normal cell division and for the maintenance of normal septation. This chain is Probable GTP-binding protein EngB, found in Polynucleobacter asymbioticus (strain DSM 18221 / CIP 109841 / QLW-P1DMWA-1) (Polynucleobacter necessarius subsp. asymbioticus).